A 449-amino-acid polypeptide reads, in one-letter code: MGRSRHHNKLKEGIFEAEITALSHDGRGIAKVDGKTTFIPFTLPGEVVKFEYTFTKAKFDEAKVVEYVKKSSNRVNPPCEHFQICGGCSLQHMSTDAQIEHKQQTLINQLKYIGNGVEPENILPPLRTSNTEGYRNKARLGVRYVSKKGKILVGFRERNGRFLADIDKCIVLNPLVGDKITEISSFIETLSIYQHIAQLEIAIDDTRPAMIVRHLEPFTNEDLEKLRSFAQQNNYWIYLQSKGPDTIFRLYPQGDVEPKKLSYQPAAGIDIGFEPNDFTQVNNDINKKMIKRAIELLDISENDSIIDLFCGLGNFTLPISQHAKTVIGVEGEPTMVKRAKETADNNNITNVNFYAANLFESFEDKEWFNNFEYNKMLLDPPRAGAQEVCNNIEKFNVKRIVYVSCDTATLARDAGILVNNKDYKLISAGVMDMFPHTMHVESIAVFEKI.

A TRAM domain is found at M1–E66. Residues C79, C85, C88, and C169 each contribute to the [4Fe-4S] cluster site. Positions 280, 309, 314, 330, 357, and 379 each coordinate S-adenosyl-L-methionine. C405 acts as the Nucleophile in catalysis.

Belongs to the class I-like SAM-binding methyltransferase superfamily. RNA M5U methyltransferase family. RlmD subfamily.

It carries out the reaction uridine(1939) in 23S rRNA + S-adenosyl-L-methionine = 5-methyluridine(1939) in 23S rRNA + S-adenosyl-L-homocysteine + H(+). In terms of biological role, catalyzes the formation of 5-methyl-uridine at position 1939 (m5U1939) in 23S rRNA. The polypeptide is 23S rRNA (uracil(1939)-C(5))-methyltransferase RlmD (Francisella tularensis subsp. novicida (strain U112)).